Here is a 443-residue protein sequence, read N- to C-terminus: SURP and G-patch domain-containing protein 1-like protein (443 aa).

2 disordered regions span residues 45–71 (IISN…KGGK) and 83–141 (LAPP…TVKK). Residues 142-185 (VADKLASFVAKHGRPFEHITRQKNPGDTPFKFLFDENCADYKYY) form an SURP motif repeat. 3 disordered regions span residues 198–221 (QTKD…AIPL), 241–272 (TPVE…RGAD), and 285–325 (AQEE…HHMG). The span at 248–265 (SSRSAQASITRPSDSDSF) shows a compositional bias: polar residues. Residues 285–300 (AQEEKMRRPRQSKDEM) are compositionally biased toward basic and acidic residues. The segment covering 307 to 316 (QGPSETSSTD) has biased composition (polar residues). In terms of domain architecture, G-patch spans 360-407 (ADNVGHKLLSKMGWKEGEGIGSSRKGMADPIMAGDVKTNNLGVGASAP).

Its subcellular location is the nucleus. The chain is SURP and G-patch domain-containing protein 1-like protein from Arabidopsis thaliana (Mouse-ear cress).